The primary structure comprises 273 residues: 2,3,4,5-tetrahydropyridine-2,6-dicarboxylate N-succinyltransferase (273 aa).

This sequence belongs to the transferase hexapeptide repeat family.

It localises to the cytoplasm. The enzyme catalyses (S)-2,3,4,5-tetrahydrodipicolinate + succinyl-CoA + H2O = (S)-2-succinylamino-6-oxoheptanedioate + CoA. Its pathway is amino-acid biosynthesis; L-lysine biosynthesis via DAP pathway; LL-2,6-diaminopimelate from (S)-tetrahydrodipicolinate (succinylase route): step 1/3. The chain is 2,3,4,5-tetrahydropyridine-2,6-dicarboxylate N-succinyltransferase from Acinetobacter baumannii (strain SDF).